The chain runs to 715 residues: SANT and BTB domain regulator of class switch recombination (715 aa).

The 39-residue stretch at 21–59 (DMILCSLVGVPQPISWDSVARLVPGYTPKECAKRFEELK) folds into the SANT domain. The 109-residue stretch at 146-254 (MVIHVCDEAK…ECIRYCHKNM (109 aa)) folds into the BTB domain. The segment covering 552–573 (SEEEDYTTGSEVTEDEVGDEEE) has biased composition (acidic residues). Disordered regions lie at residues 552–623 (SEEE…VSLQ) and 689–715 (SAHS…GRPT). Residues 578-605 (QAGRKVKPKRSAKQTKKHISSPSIHKKE) show a composition bias toward basic residues. Composition is skewed to polar residues over residues 614–623 (DSSPFTVSLQ) and 690–699 (AHSNTRQMNT).

Belongs to the KIAA1841 family. In terms of assembly, homodimer.

Negatively regulates class switch recombination or isotype switching in splenic B-cells. This chain is SANT and BTB domain regulator of class switch recombination, found in Xenopus laevis (African clawed frog).